Here is a 617-residue protein sequence, read N- to C-terminus: uncharacterized protein (617 aa).

Residues 33 to 134 (TEDDFRGEKF…FXNATKQKGS (102 aa)) form the B12-binding N-terminal domain. Methylcob(III)alamin is bound by residues glutamate 84, 146–150 (GDVHD), histidine 149, serine 194, threonine 198, and alanine 251. A B12-binding domain is found at 136–272 (NGKVVIATVK…NPEGRAALWE (137 aa)). The 330-residue stretch at 288–617 (SKPLRKQLSI…MMKWLGVAMK (330 aa)) folds into the AdoMet activation domain. S-adenosyl-L-methionine contacts are provided by residues aspartate 337, arginine 528, and 583–584 (YF).

Belongs to the vitamin-B12 dependent methionine synthase family.

This is an uncharacterized protein from Haemophilus influenzae (strain ATCC 51907 / DSM 11121 / KW20 / Rd).